Here is a 113-residue protein sequence, read N- to C-terminus: Ribulose bisphosphate carboxylase small subunit (113 aa).

This sequence belongs to the RuBisCO small chain family. As to quaternary structure, heterohexadecamer of 8 large and 8 small subunits. Forms a CsoS2-CsoS1-RuBisCO complex.

The protein localises to the carboxysome. Its function is as follows. RuBisCO catalyzes two reactions: the carboxylation of D-ribulose 1,5-bisphosphate, the primary event in carbon dioxide fixation, as well as the oxidative fragmentation of the pentose substrate in the photorespiration process. Both reactions occur simultaneously and in competition at the same active site. Although the small subunit is not catalytic it is essential for maximal activity. There are estimated to be 152 RuBisCO holoenzymes per carboxysome. This chain is Ribulose bisphosphate carboxylase small subunit, found in Prochlorococcus marinus subsp. pastoris (strain CCMP1986 / NIES-2087 / MED4).